Reading from the N-terminus, the 218-residue chain is Protein GrpE (218 aa).

Residues 1–10 (MSGEASTPAQ) are compositionally biased toward polar residues. Disordered stretches follow at residues 1–44 (MSGE…DPAE) and 198–218 (SMGP…AEDS). Positions 200–218 (GPGPSADAEGAASAEAEDS) are enriched in low complexity.

Belongs to the GrpE family. Homodimer.

The protein localises to the cytoplasm. In terms of biological role, participates actively in the response to hyperosmotic and heat shock by preventing the aggregation of stress-denatured proteins, in association with DnaK and GrpE. It is the nucleotide exchange factor for DnaK and may function as a thermosensor. Unfolded proteins bind initially to DnaJ; upon interaction with the DnaJ-bound protein, DnaK hydrolyzes its bound ATP, resulting in the formation of a stable complex. GrpE releases ADP from DnaK; ATP binding to DnaK triggers the release of the substrate protein, thus completing the reaction cycle. Several rounds of ATP-dependent interactions between DnaJ, DnaK and GrpE are required for fully efficient folding. This chain is Protein GrpE, found in Parasynechococcus marenigrum (strain WH8102).